The sequence spans 135 residues: Small ribosomal subunit protein bS16m (135 aa).

A mitochondrion-targeting transit peptide spans 1-34 (MVQLTTVLCKAYRGGHLTIRLALGGCTNRPFYRI). T130 is subject to Phosphothreonine.

Belongs to the bacterial ribosomal protein bS16 family. In terms of assembly, component of the mitochondrial ribosome small subunit (28S) which comprises a 12S rRNA and about 30 distinct proteins.

The protein resides in the mitochondrion. The chain is Small ribosomal subunit protein bS16m (MRPS16) from Bos taurus (Bovine).